The sequence spans 207 residues: Guanylate kinase (207 aa).

The 181-residue stretch at 4–184 (GTLYIVSAPS…ALADLHTIIR (181 aa)) folds into the Guanylate kinase-like domain. 11–18 (APSGAGKS) is an ATP binding site.

The protein belongs to the guanylate kinase family.

It is found in the cytoplasm. It carries out the reaction GMP + ATP = GDP + ADP. Functionally, essential for recycling GMP and indirectly, cGMP. The chain is Guanylate kinase from Photorhabdus laumondii subsp. laumondii (strain DSM 15139 / CIP 105565 / TT01) (Photorhabdus luminescens subsp. laumondii).